The sequence spans 58 residues: MLEKMGIVVAFLISLTVLTINSLTIVEKVRNLKNGTSKKKKRIRKRLRPKRQRQRIRR.

A helical membrane pass occupies residues 6–26; sequence GIVVAFLISLTVLTINSLTIV. The segment at 35-58 is disordered; that stretch reads GTSKKKKRIRKRLRPKRQRQRIRR. The segment covering 36-58 has biased composition (basic residues); it reads TSKKKKRIRKRLRPKRQRQRIRR.

The protein localises to the cell membrane. The chain is SPbeta prophage-derived uncharacterized protein YonT (yonT) from Bacillus subtilis (strain 168).